The primary structure comprises 800 residues: Elongation factor G, mitochondrial (800 aa).

The transit peptide at 1–34 (MSVHTVMRTQVRSLAGMPKAAMRPLGNSFCARRY) directs the protein to the mitochondrion. A tr-type G domain is found at 99 to 385 (SKVRNIGIAA…GICDYLPNPA (287 aa)). GTP is bound by residues 108–115 (AHIDSGKT), 183–187 (DTPGH), and 237–240 (NKMD).

Belongs to the TRAFAC class translation factor GTPase superfamily. Classic translation factor GTPase family. EF-G/EF-2 subfamily.

Its subcellular location is the mitochondrion. It functions in the pathway protein biosynthesis; polypeptide chain elongation. Mitochondrial GTPase that catalyzes the GTP-dependent ribosomal translocation step during translation elongation. During this step, the ribosome changes from the pre-translocational (PRE) to the post-translocational (POST) state as the newly formed A-site-bound peptidyl-tRNA and P-site-bound deacylated tRNA move to the P and E sites, respectively. Catalyzes the coordinated movement of the two tRNA molecules, the mRNA and conformational changes in the ribosome. This chain is Elongation factor G, mitochondrial, found in Coccidioides immitis (strain RS) (Valley fever fungus).